The chain runs to 225 residues: MTDIGKHNTEIEQDEMENLLRMDPVRSSLDVESRAIEPDNIAGESIVETRFTGGDSLDEPIRVTLFNEFRAIGEKLVYVLYPKNAQVLRDWDLWGPLIFSLVIALALALSTDKIERESVFTVVVALIWFGEAVCSLNIKLLGANISIFQSMCILGYSSFPLMIASIVCAFVPLIFIRIPVIVAMYAWTLFAAMGVLQNSNLSNKKLLAVYPLFLFYFSLAWIIFL.

Phosphoserine is present on residues S27 and S28. 5 helical membrane passes run 91–111 (WDLW…ALST), 118–138 (SVFT…SLNI), 154–176 (LGYS…LIFI), 180–199 (VIVA…LQNS), and 205–225 (KLLA…IIFL).

The protein belongs to the YIP1 family. As to quaternary structure, interacts with the YIP1 family members yip1 and yip5, and with several Rab GTPases.

The protein resides in the membrane. May be involved in proper membrane localization of Rab GTPases. The chain is Protein YIP4 from Schizosaccharomyces pombe (strain 972 / ATCC 24843) (Fission yeast).